Reading from the N-terminus, the 529-residue chain is [Pyruvate dehydrogenase [acetyl-transferring]]-phosphatase 2, mitochondrial (529 aa).

The N-terminal 66 residues, 1-66 (MSSTVSYWIL…FTLCKAYRHT (66 aa)), are a transit peptide targeting the mitochondrion. Residues 106-517 (VLRFESNQLA…DDITVTVVYF (412 aa)) enclose the PPM-type phosphatase domain. Mn(2+) is bound by residues aspartate 141, glycine 142, aspartate 412, and aspartate 508.

The protein belongs to the PP2C family. Requires Mg(2+) as cofactor.

Its subcellular location is the mitochondrion. The enzyme catalyses O-phospho-L-seryl-[pyruvate dehydrogenase E1 alpha subunit] + H2O = L-seryl-[pyruvate dehydrogenase E1 alpha subunit] + phosphate. In terms of biological role, mitochondrial enzyme that catalyzes the dephosphorylation and concomitant reactivation of the alpha subunit of the E1 component of the pyruvate dehydrogenase complex (PDC), thereby stimulating the conversion of pyruvate into acetyl-CoA. Acts as a crucial regulator of T cell metabolism and function, with a particular focus on T-helper Th17. The sequence is that of [Pyruvate dehydrogenase [acetyl-transferring]]-phosphatase 2, mitochondrial from Homo sapiens (Human).